Consider the following 434-residue polypeptide: Nicotinate phosphoribosyltransferase (434 aa).

A Phosphohistidine; by autocatalysis modification is found at His242.

This sequence belongs to the NAPRTase family. Transiently phosphorylated on a His residue during the reaction cycle. Phosphorylation strongly increases the affinity for substrates and increases the rate of nicotinate D-ribonucleotide production. Dephosphorylation regenerates the low-affinity form of the enzyme, leading to product release.

The catalysed reaction is nicotinate + 5-phospho-alpha-D-ribose 1-diphosphate + ATP + H2O = nicotinate beta-D-ribonucleotide + ADP + phosphate + diphosphate. Its pathway is cofactor biosynthesis; NAD(+) biosynthesis; nicotinate D-ribonucleotide from nicotinate: step 1/1. In terms of biological role, catalyzes the synthesis of beta-nicotinate D-ribonucleotide from nicotinate and 5-phospho-D-ribose 1-phosphate at the expense of ATP. In Brucella abortus (strain S19), this protein is Nicotinate phosphoribosyltransferase.